We begin with the raw amino-acid sequence, 66 residues long: Large ribosomal subunit protein uL29 (66 aa).

This sequence belongs to the universal ribosomal protein uL29 family.

This chain is Large ribosomal subunit protein uL29, found in Pseudothermotoga lettingae (strain ATCC BAA-301 / DSM 14385 / NBRC 107922 / TMO) (Thermotoga lettingae).